A 524-amino-acid polypeptide reads, in one-letter code: Bifunctional purine biosynthesis protein PurH (524 aa).

Positions 1–149 (MSDPLIKRAL…KNNESVTVLT (149 aa)) constitute an MGS-like domain.

The protein belongs to the PurH family.

It carries out the reaction (6R)-10-formyltetrahydrofolate + 5-amino-1-(5-phospho-beta-D-ribosyl)imidazole-4-carboxamide = 5-formamido-1-(5-phospho-D-ribosyl)imidazole-4-carboxamide + (6S)-5,6,7,8-tetrahydrofolate. The enzyme catalyses IMP + H2O = 5-formamido-1-(5-phospho-D-ribosyl)imidazole-4-carboxamide. It functions in the pathway purine metabolism; IMP biosynthesis via de novo pathway; 5-formamido-1-(5-phospho-D-ribosyl)imidazole-4-carboxamide from 5-amino-1-(5-phospho-D-ribosyl)imidazole-4-carboxamide (10-formyl THF route): step 1/1. Its pathway is purine metabolism; IMP biosynthesis via de novo pathway; IMP from 5-formamido-1-(5-phospho-D-ribosyl)imidazole-4-carboxamide: step 1/1. This chain is Bifunctional purine biosynthesis protein PurH, found in Chlorobium luteolum (strain DSM 273 / BCRC 81028 / 2530) (Pelodictyon luteolum).